The primary structure comprises 87 residues: Small ribosomal subunit protein bS16 (87 aa).

This sequence belongs to the bacterial ribosomal protein bS16 family.

The sequence is that of Small ribosomal subunit protein bS16 from Nitrosospira multiformis (strain ATCC 25196 / NCIMB 11849 / C 71).